Here is a 435-residue protein sequence, read N- to C-terminus: GTPase Der (435 aa).

2 consecutive EngA-type G domains span residues 3–167 (NIVA…KDEG) and 176–351 (PRIA…ENRG). GTP is bound by residues 9 to 16 (GRPNVGKS), 56 to 60 (DTGGY), 119 to 122 (NKSD), 182 to 189 (GRPNAGKS), 229 to 233 (DTAGI), and 294 to 297 (NKWD). The 84-residue stretch at 352-435 (KRIPTSELND…VPISIVYRKK (84 aa)) folds into the KH-like domain.

The protein belongs to the TRAFAC class TrmE-Era-EngA-EngB-Septin-like GTPase superfamily. EngA (Der) GTPase family. Associates with the 50S ribosomal subunit.

Functionally, GTPase that plays an essential role in the late steps of ribosome biogenesis. This is GTPase Der from Cytophaga hutchinsonii (strain ATCC 33406 / DSM 1761 / CIP 103989 / NBRC 15051 / NCIMB 9469 / D465).